Here is a 339-residue protein sequence, read N- to C-terminus: Uroporphyrinogen decarboxylase (339 aa).

Substrate contacts are provided by residues 21-25, Asp-71, Tyr-147, Ser-202, and His-315; that span reads RQAGR.

This sequence belongs to the uroporphyrinogen decarboxylase family. As to quaternary structure, homodimer.

It is found in the cytoplasm. It catalyses the reaction uroporphyrinogen III + 4 H(+) = coproporphyrinogen III + 4 CO2. The protein operates within porphyrin-containing compound metabolism; protoporphyrin-IX biosynthesis; coproporphyrinogen-III from 5-aminolevulinate: step 4/4. In terms of biological role, catalyzes the decarboxylation of four acetate groups of uroporphyrinogen-III to yield coproporphyrinogen-III. The chain is Uroporphyrinogen decarboxylase from Helicobacter acinonychis (strain Sheeba).